The following is a 177-amino-acid chain: PBAN-type neuropeptides (177 aa).

The N-terminal stretch at 1-23 is a signal peptide; the sequence is MIVTGNPVCAIALLLCLVFRASG. Positions 24–54 are excised as a propeptide; sequence EYELEMSSGGSNDGRSPSNDFGSCTDGKCTK. The disordered stretch occupies residues 28–73; it reads EMSSGGSNDGRSPSNDFGSCTDGKCTKRTTTTQESGISSGMWFGPR. The segment covering 31–45 has biased composition (polar residues); that stretch reads SGGSNDGRSPSNDFG. Low complexity predominate over residues 47-59; it reads CTDGKCTKRTTTT. The residue at position 74 (leucine 74) is a Leucine amide. A propeptide spanning residues 78–113 is cleaved from the precursor; the sequence is HKSNEKQQINPEIEMLVNALDQPGMRWTVITIPANE. Leucine 124, leucine 154, and leucine 166 each carry leucine amide. Positions 169–177 are excised as a propeptide; it reads QSRSVSRKI.

Belongs to the pyrokinin family. In terms of tissue distribution, pyrokinins (PK) 1 to 4 are expressed in the retrocerebral complex. PK 1 is expressed in central brain, anntennal lobes and abominal ganglia. PK 2 is expressed in optical lobes and in gnathal, thoracic and abdominal ganglia. PK 3 is expressed in optical lobes and in thoracic and abdominal ganglia (at protein level).

The protein localises to the secreted. Pyrokinins mediate visceral muscle contractile activity (myotropic activity). The polypeptide is PBAN-type neuropeptides (Camponotus floridanus (Florida carpenter ant)).